The primary structure comprises 210 residues: Cancer/testis antigen 2 (210 aa).

2 stretches are compositionally biased toward gly residues: residues 1–47 and 56–66; these read MQAE…GPRG and PRGGAPRGPHG. 2 disordered regions span residues 1–80 and 154–197; these read MQAE…PCGA and GLGS…DGCR. Basic and acidic residues predominate over residues 163–177; sequence QKARDLRTPKHKVSE.

This sequence belongs to the CTAG/PCC1 family. As to expression, testis and very low level in placenta and in some uterus samples. Observed in 25-50% of tumor samples of melanomas, non-small-cell lung carcinomas, bladder, prostate and head and neck cancers.

This chain is Cancer/testis antigen 2 (CTAG2), found in Homo sapiens (Human).